The primary structure comprises 122 residues: Large ribosomal subunit protein uL14 (122 aa).

Belongs to the universal ribosomal protein uL14 family. In terms of assembly, part of the 50S ribosomal subunit. Forms a cluster with proteins L3 and L19. In the 70S ribosome, L14 and L19 interact and together make contacts with the 16S rRNA in bridges B5 and B8.

In terms of biological role, binds to 23S rRNA. Forms part of two intersubunit bridges in the 70S ribosome. The chain is Large ribosomal subunit protein uL14 from Borreliella burgdorferi (strain ZS7) (Borrelia burgdorferi).